The primary structure comprises 494 residues: Guanosine-5'-triphosphate,3'-diphosphate pyrophosphatase (494 aa).

It belongs to the GppA/Ppx family. GppA subfamily.

It carries out the reaction guanosine 3'-diphosphate 5'-triphosphate + H2O = guanosine 3',5'-bis(diphosphate) + phosphate + H(+). The protein operates within purine metabolism; ppGpp biosynthesis; ppGpp from GTP: step 2/2. Its function is as follows. Catalyzes the conversion of pppGpp to ppGpp. Guanosine pentaphosphate (pppGpp) is a cytoplasmic signaling molecule which together with ppGpp controls the 'stringent response', an adaptive process that allows bacteria to respond to amino acid starvation, resulting in the coordinated regulation of numerous cellular activities. This Escherichia coli O6:H1 (strain CFT073 / ATCC 700928 / UPEC) protein is Guanosine-5'-triphosphate,3'-diphosphate pyrophosphatase.